Here is a 102-residue protein sequence, read N- to C-terminus: Small ribosomal subunit protein uS10 (102 aa).

It belongs to the universal ribosomal protein uS10 family. As to quaternary structure, part of the 30S ribosomal subunit.

Its function is as follows. Involved in the binding of tRNA to the ribosomes. The protein is Small ribosomal subunit protein uS10 of Tropheryma whipplei (strain TW08/27) (Whipple's bacillus).